The chain runs to 586 residues: Alpha-1,2-mannosyltransferase MNN5 (586 aa).

A signal peptide spans 1–29 (MLIRLKKRKILQVIVSAVVLILFFCSVHN). N-linked (GlcNAc...) asparagine glycosylation is found at asparagine 113, asparagine 136, asparagine 259, and asparagine 264.

It belongs to the MNN1/MNT family. Post-translationally, glycosylated.

It is found in the golgi apparatus. The protein resides in the cis-Golgi network. The protein operates within protein modification; protein glycosylation. Its function is as follows. Responsible for addition of first and second mannose residues to the outer chain of core N-linked polysaccharides and to O-linked mannotriose. Implicated in late Golgi modifications. The chain is Alpha-1,2-mannosyltransferase MNN5 (MNN5) from Saccharomyces cerevisiae (strain YJM789) (Baker's yeast).